The primary structure comprises 301 residues: 2-aminobenzoylacetyl-CoA thioesterase (301 aa).

Fe cation-binding residues include His69, His71, Asp73, His74, His159, Asp178, and His221.

It belongs to the metallo-beta-lactamase superfamily.

It carries out the reaction (2-aminobenzoyl)acetyl-CoA + H2O = (2-aminobenzoyl)acetate + CoA + H(+). Its activity is regulated as follows. Thioesterase activity, but not pyocyanine production, is inhibited by 2-(pyridin-3-yl)benzoic acid, 2-(1H-pyrrol-1-yl)benzoic acid and 3-methylthiophene-2-carboxylic acid. Compounds bind to the active center. Required for the biosynthesis of the quorum-sensing signaling molecules 2-heptyl-4(1H)-quinolone (HHQ) and 2-heptyl-3-hydroxy-4(1H)-quinolone (Pseudomonas quinolone signal or PQS), which are important for biofilm formation and virulence. Catalyzes the hydrolysis of the intermediate 2-aminobenzoylacetyl-CoA (2-ABA-CoA) to form 2-aminobenzoylacetate (2-ABA), the precursor of HHQ. In vitro, can also hydrolyze other substrates such as S-ethyl-acetothioacetate and acetoacetyl-CoA, but is inactive against anthraniloyl-CoA, malonyl-CoA and octanoyl-CoA. Beyond its thioesterase function, is involved in the regulation of diverse genes coding for key virulence determinants and biofilm development. This Pseudomonas aeruginosa (strain ATCC 15692 / DSM 22644 / CIP 104116 / JCM 14847 / LMG 12228 / 1C / PRS 101 / PAO1) protein is 2-aminobenzoylacetyl-CoA thioesterase.